A 156-amino-acid polypeptide reads, in one-letter code: Transcription antitermination protein NusB (156 aa).

This sequence belongs to the NusB family.

In terms of biological role, involved in transcription antitermination. Required for transcription of ribosomal RNA (rRNA) genes. Binds specifically to the boxA antiterminator sequence of the ribosomal RNA (rrn) operons. This is Transcription antitermination protein NusB from Mycobacterium bovis (strain ATCC BAA-935 / AF2122/97).